The sequence spans 213 residues: Riboflavin/roseoflavin transporter RibM (213 aa).

5 consecutive transmembrane segments (helical) span residues 15-35, 38-58, 107-129, 136-158, and 171-193; these read HIIWSDMVGNILGLITLALGF, SLWTWPVQFLSGLVLFGAFYG, IAAAAVGTVAVALLFKAYPSLSW, YIFVGTIVAMYAQARGMVEFWFA, and FANGYAFSGFVYVIYGALVLWGM.

The protein belongs to the nicotinamide ribonucleoside (NR) uptake permease (TC 4.B.1) family.

It localises to the cell membrane. Functionally, transports riboflavin and roseoflavin. Can also transport FMN and FAD. May confer roseoflavin resistance to S.davawensis, which naturally produces this antibiotic during stationary growth phase. This Streptomyces davaonensis (strain DSM 101723 / JCM 4913 / KCC S-0913 / 768) protein is Riboflavin/roseoflavin transporter RibM.